Reading from the N-terminus, the 406-residue chain is Transcriptional activator NprA (406 aa).

TPR repeat units follow at residues 125–158 (YYYY…FRSQ), 206–239 (AECH…AQII), 246–279 (GTIE…KRNS), and 285–318 (FITL…LKRE).

Activates the transcription of nprS by about five fold. May bind to the upstream region of nprS promoter. This is Transcriptional activator NprA (nprA) from Geobacillus stearothermophilus (Bacillus stearothermophilus).